The sequence spans 230 residues: Orotidine 5'-phosphate decarboxylase (230 aa).

Residues aspartate 10, lysine 32, 59-68 (DLKYHDIPNT), threonine 119, arginine 180, glutamine 189, glycine 209, and arginine 210 contribute to the substrate site. The Proton donor role is filled by lysine 61.

This sequence belongs to the OMP decarboxylase family. Type 1 subfamily. Homodimer.

The catalysed reaction is orotidine 5'-phosphate + H(+) = UMP + CO2. It functions in the pathway pyrimidine metabolism; UMP biosynthesis via de novo pathway; UMP from orotate: step 2/2. Its function is as follows. Catalyzes the decarboxylation of orotidine 5'-monophosphate (OMP) to uridine 5'-monophosphate (UMP). This chain is Orotidine 5'-phosphate decarboxylase, found in Haemophilus influenzae (strain 86-028NP).